The following is a 419-amino-acid chain: L-rhamnose isomerase (419 aa).

Mn(2+) is bound by residues His-262, Asp-294, and Asp-296.

It belongs to the rhamnose isomerase family. In terms of assembly, homotetramer. The cofactor is Mn(2+).

The protein resides in the cytoplasm. The catalysed reaction is L-rhamnopyranose = L-rhamnulose. It participates in carbohydrate degradation; L-rhamnose degradation; glycerone phosphate from L-rhamnose: step 1/3. Its function is as follows. Catalyzes the interconversion of L-rhamnose and L-rhamnulose. The sequence is that of L-rhamnose isomerase from Escherichia coli O7:K1 (strain IAI39 / ExPEC).